A 101-amino-acid polypeptide reads, in one-letter code: UPF0235 protein Cpha266_2081 (101 aa).

This sequence belongs to the UPF0235 family.

This chain is UPF0235 protein Cpha266_2081, found in Chlorobium phaeobacteroides (strain DSM 266 / SMG 266 / 2430).